Consider the following 220-residue polypeptide: CRIB domain-containing protein RIC3 (220 aa).

The CRIB domain maps to 28–41 (IGFPTDVKHVAHIG). A disordered region spans residues 39 to 220 (HIGSDGPATN…CNDNNISDKE (182 aa)). The segment covering 61–77 (NENGQVVSRADANNNQI) has biased composition (polar residues). The span at 108 to 121 (NGSPPRRNSSASAS) shows a compositional bias: low complexity. Composition is skewed to basic residues over residues 127-136 (NTRRHHRSRH) and 172-184 (HSRK…RKPK). The segment covering 209–220 (DTCNDNNISDKE) has biased composition (polar residues).

In terms of assembly, interacts with ARAC11/ROP1. Expressed in flowers and pollen.

It localises to the cytoplasm. Functions as a downstream effector of Rho-related GTP binding proteins of the 'Rho of Plants' (ROPs) family. Participates in the propagation of ROP GTPase signals in specific cellular responses. Functions as a downstream effector of ARAC11/ROP1 to activate calcium signaling that leads to F-actin disassembly associated with exocytosis in the tip of the growing pollen tube. Counteracts the ARAC11/ROP1-RIC4 pathway, which promotes apical F-actin assembly associated with vesicle accumulation, to control actin dynamics and pollen tube apical growth. In Arabidopsis thaliana (Mouse-ear cress), this protein is CRIB domain-containing protein RIC3 (RIC3).